Here is a 568-residue protein sequence, read N- to C-terminus: Phosphoprotein (568 aa).

Residues 1-24 form a disordered region; that stretch reads MDQDAFFFERDPEAEGEAPRKQES. Positions 7-24 are enriched in basic and acidic residues; the sequence is FFERDPEAEGEAPRKQES. Residues 33–41 form an N0 binding region; sequence DVVLSYKPT. Residues 45 to 324 are disordered; the sequence is EDRSWLHNII…SNEEGTSNTS (280 aa). Composition is skewed to basic and acidic residues over residues 56 to 105, 129 to 144, and 151 to 167; these read NPKE…HARI, GDER…PNER, and PTDE…KREE. Over residues 179-216 the composition is skewed to polar residues; it reads GSTSLSDDGEGRTNNNGRSMETSSTHSTRITDVITNPS. A compositionally biased stretch (basic and acidic residues) spans 239–253; that stretch reads TRSERTQNSELHKST. A compositionally biased stretch (low complexity) spans 295-304; it reads TTNNANNNAK. Positions 344–411 are multimerization; it reads FELSRRASHQ…SSRDLHKRFS (68 aa). Positions 387 to 416 form a coiled coil; it reads EENRTLLKQIQEEIDSSRDLHKRFSEYQKE. The segment at 412 to 445 is l protein binding; sequence EYQKEQNSLMMANLSTLHIITDRGGKTGDPSDTT. Disordered stretches follow at residues 434-455 and 493-513; these read RGGK…TKGK and PVLE…LIPS. Residues 441–450 are compositionally biased toward polar residues; sequence PSDTTRSPSV. The interaction with the nucleocapsid (N-RNA) stretch occupies residues 479-568; sequence DLIREDELRE…FEEDIDSLTN (90 aa).

Belongs to the respirovirus P protein family. Homotetramer. Interacts (via multimerization domain) with polymerase L; this interaction forms the polymerase complex. Interacts (via N-terminus) with N0; this interaction allows P to chaperon N0 before encapsidation and form the N-P complex. Interacts (via C-terminus) with N-RNA template; this interaction positions the polymerase on the template.

In terms of biological role, essential cofactor of the RNA polymerase L that plays a central role in the transcription and replication by forming the polymerase complex with RNA polymerase L and recruiting L to the genomic N-RNA template for RNA synthesis. Also plays a central role in the encapsidation of nascent RNA chains by forming the encapsidation complex with the nucleocapsid protein N (N-P complex). Acts as a chaperone for newly synthesized free N protein, so-called N0, allowing encapsidation of nascent RNA chains during replication. The nucleoprotein protein N prevents excessive phosphorylation of P, which leads to down-regulation of viral transcription/ replication. Participates, together with N, in the formation of viral factories (viroplasms), which are large inclusions in the host cytoplasm where replication takes place. Recruits host PI4KB and remodel the host endoplasmic reticulum membrane to form viral replication factories. The chain is Phosphoprotein (P/C) from Homo sapiens (Human).